The sequence spans 440 residues: MKRKVDEFMERHGLGVGDLVRVVKREGDERITFEGLVMPPYELSPGETLTIKLDNGYNIGILIDAIEGIEILEKAKEAPKMEFREVLPRKEGLPSVTILGTGGTIASRIDYKTGAVHAAFTAEELAKAVPEIFDIANITPKLLFNIMSEDMKPEYWKKIAHEAAKALNSDEDGVVIAHGTDTMGYTAAALSFMLRNLTKPVVLVGSQRSSDRPSSDAAMNLICATRMAVSDAAEVMVVMHGETSDTYCLAHRGTKVRKMHTSRRDTFRSINDVPIAKVWPDGKIEYLRDDYRKRGEGEVEVDDKFEEKVAILKIYPGVTSELLEFLVDRGYKGIVIEGTGLGHTPNDMIPAIERAVENGVAVCMTSQCLYGRVNLNVYSTGRRLLKAGVIPCEDMLPETAYVKLGWVLGHTDDLKEVRRMMLTNYAGEITPYTRFDTFLR.

Positions P94–N424 constitute an Asparaginase/glutaminase domain. Active-site residues include T104, T180, D181, and K258.

This sequence belongs to the asparaginase 1 family. GatD subfamily. In terms of assembly, heterodimer of GatD and GatE.

The catalysed reaction is L-glutamyl-tRNA(Gln) + L-glutamine + ATP + H2O = L-glutaminyl-tRNA(Gln) + L-glutamate + ADP + phosphate + H(+). In terms of biological role, allows the formation of correctly charged Gln-tRNA(Gln) through the transamidation of misacylated Glu-tRNA(Gln) in organisms which lack glutaminyl-tRNA synthetase. The reaction takes place in the presence of glutamine and ATP through an activated gamma-phospho-Glu-tRNA(Gln). The GatDE system is specific for glutamate and does not act on aspartate. In Thermococcus kodakarensis (strain ATCC BAA-918 / JCM 12380 / KOD1) (Pyrococcus kodakaraensis (strain KOD1)), this protein is Glutamyl-tRNA(Gln) amidotransferase subunit D.